A 224-amino-acid chain; its full sequence is Biosynthetic peptidoglycan transglycosylase (224 aa).

Residues isoleucine 12–valine 32 form a helical membrane-spanning segment.

This sequence belongs to the glycosyltransferase 51 family.

The protein resides in the cell inner membrane. It carries out the reaction [GlcNAc-(1-&gt;4)-Mur2Ac(oyl-L-Ala-gamma-D-Glu-L-Lys-D-Ala-D-Ala)](n)-di-trans,octa-cis-undecaprenyl diphosphate + beta-D-GlcNAc-(1-&gt;4)-Mur2Ac(oyl-L-Ala-gamma-D-Glu-L-Lys-D-Ala-D-Ala)-di-trans,octa-cis-undecaprenyl diphosphate = [GlcNAc-(1-&gt;4)-Mur2Ac(oyl-L-Ala-gamma-D-Glu-L-Lys-D-Ala-D-Ala)](n+1)-di-trans,octa-cis-undecaprenyl diphosphate + di-trans,octa-cis-undecaprenyl diphosphate + H(+). Its pathway is cell wall biogenesis; peptidoglycan biosynthesis. Functionally, peptidoglycan polymerase that catalyzes glycan chain elongation from lipid-linked precursors. The chain is Biosynthetic peptidoglycan transglycosylase from Brucella suis biovar 1 (strain 1330).